The chain runs to 124 residues: Small ribosomal subunit protein uS12 (124 aa).

The residue at position 89 (D89) is a 3-methylthioaspartic acid. The segment at 103–124 (DTAGVKDRRQGRSKYGAKRPKD) is disordered. Basic residues predominate over residues 113 to 124 (GRSKYGAKRPKD).

Belongs to the universal ribosomal protein uS12 family. In terms of assembly, part of the 30S ribosomal subunit. Contacts proteins S8 and S17. May interact with IF1 in the 30S initiation complex.

Functionally, with S4 and S5 plays an important role in translational accuracy. Its function is as follows. Interacts with and stabilizes bases of the 16S rRNA that are involved in tRNA selection in the A site and with the mRNA backbone. Located at the interface of the 30S and 50S subunits, it traverses the body of the 30S subunit contacting proteins on the other side and probably holding the rRNA structure together. The combined cluster of proteins S8, S12 and S17 appears to hold together the shoulder and platform of the 30S subunit. This chain is Small ribosomal subunit protein uS12, found in Acaryochloris marina (strain MBIC 11017).